The following is a 353-amino-acid chain: Chloroplastic lipocalin (353 aa).

Positions 1 to 18 are enriched in low complexity; that stretch reads MILLSSSISLSRPVSSQS. A disordered region spans residues 1-27; that stretch reads MILLSSSISLSRPVSSQSFSPPAATST. The transit peptide at 1–39 directs the protein to the chloroplast; the sequence is MILLSSSISLSRPVSSQSFSPPAATSTRRSHSSVTVKCC. Cys163 and Cys299 are joined by a disulfide.

This sequence belongs to the calycin superfamily. Lipocalin family. Expressed in leaves at low levels (at protein levels). Present in seeds.

The protein resides in the plastid. Its subcellular location is the chloroplast thylakoid lumen. Its function is as follows. Lipocalin that prevents thylakoidal membrane lipids peroxidation and confers protection against oxidative stress, especially mediated by singlet oxygen in response to high light and other stress (e.g. heat shocks). Required for seed longevity by ensuring polyunsaturated lipids integrity. The sequence is that of Chloroplastic lipocalin from Arabidopsis thaliana (Mouse-ear cress).